The primary structure comprises 467 residues: 2-succinylbenzoate--CoA ligase (467 aa).

The protein belongs to the ATP-dependent AMP-binding enzyme family. MenE subfamily.

The enzyme catalyses 2-succinylbenzoate + ATP + CoA = 2-succinylbenzoyl-CoA + AMP + diphosphate. The protein operates within quinol/quinone metabolism; 1,4-dihydroxy-2-naphthoate biosynthesis; 1,4-dihydroxy-2-naphthoate from chorismate: step 5/7. Its pathway is quinol/quinone metabolism; menaquinone biosynthesis. Its function is as follows. Converts 2-succinylbenzoate (OSB) to 2-succinylbenzoyl-CoA (OSB-CoA). The polypeptide is 2-succinylbenzoate--CoA ligase (Listeria innocua serovar 6a (strain ATCC BAA-680 / CLIP 11262)).